Here is a 250-residue protein sequence, read N- to C-terminus: 2,3-bisphosphoglycerate-dependent phosphoglycerate mutase (250 aa).

Substrate contacts are provided by residues 10–17 (RHGESQWN), 23–24 (TG), Arg62, 89–92 (ERHY), Lys100, 116–117 (RR), and 185–186 (GN). The active-site Tele-phosphohistidine intermediate is His11. Residue Glu89 is the Proton donor/acceptor of the active site.

Belongs to the phosphoglycerate mutase family. BPG-dependent PGAM subfamily. As to quaternary structure, homodimer.

It catalyses the reaction (2R)-2-phosphoglycerate = (2R)-3-phosphoglycerate. The protein operates within carbohydrate degradation; glycolysis; pyruvate from D-glyceraldehyde 3-phosphate: step 3/5. In terms of biological role, catalyzes the interconversion of 2-phosphoglycerate and 3-phosphoglycerate. The polypeptide is 2,3-bisphosphoglycerate-dependent phosphoglycerate mutase (Shigella dysenteriae serotype 1 (strain Sd197)).